The chain runs to 402 residues: Multidrug resistance protein MdtH (402 aa).

The Cytoplasmic portion of the chain corresponds to 1-12; that stretch reads MSRVSQARNLGK. A helical membrane pass occupies residues 13-33; that stretch reads YFLLIDNMLVVLGFFVVFPLI. At 34–98 the chain is on the periplasmic side; that stretch reads SIRFVDQMGW…GFATMGIAHE (65 aa). A helical transmembrane segment spans residues 99-116; it reads PWLLWFSCLLSGLGGTLF. The Cytoplasmic segment spans residues 117–138; it reads DPPRSALVVKLIRPQQRGRFFS. Residues 139–159 form a helical membrane-spanning segment; the sequence is LLMMQDSAGAVIGALLGSWLL. The Periplasmic segment spans residues 160–164; the sequence is QYDFR. A helical transmembrane segment spans residues 165–185; sequence LVCATGAVLFVLCAAFNAWLL. The Cytoplasmic segment spans residues 186-213; the sequence is PAWKLSTVRTPVREGMTRVMRDKRFVTY. A helical membrane pass occupies residues 214–234; it reads VLTLAGYYMLAVQVMLMLPIM. Residues 235–243 are Periplasmic-facing; it reads VNDVAGAPS. Residues 244–264 form a helical membrane-spanning segment; it reads AVKWMYAIEACLSLTLLYPIA. Over 265-276 the chain is Cytoplasmic; the sequence is RWSEKHFRLEHR. A helical transmembrane segment spans residues 277–297; sequence LMAGLLIMSLSMMPVGMVSGL. Over 298 to 299 the chain is Periplasmic; it reads QQ. The chain crosses the membrane as a helical span at residues 300-320; it reads LFTLICLFYIGSIIAEPARET. Residues 321 to 339 are Cytoplasmic-facing; sequence LSASLADARARGSYMGCSR. The helical transmembrane segment at 340-360 threads the bilayer; it reads LGLAIGGAIGYIGGGWLFDLG. Residues 361–367 lie on the Periplasmic side of the membrane; sequence KSAHQPE. A helical membrane pass occupies residues 368–388; it reads LPWMMLGIIGIFTFLALGWQF. Residues 389–402 lie on the Cytoplasmic side of the membrane; sequence SQKRAARRLLERDA.

The protein belongs to the major facilitator superfamily. DHA1 family. MdtH (TC 2.A.1.2.21) subfamily.

The protein resides in the cell inner membrane. Functionally, confers resistance to norfloxacin and enoxacin. The protein is Multidrug resistance protein MdtH of Escherichia coli (strain SE11).